The following is a 459-amino-acid chain: Glycerol-3-phosphate acyltransferase, chloroplastic (459 aa).

The N-terminal 90 residues, 1–90 (MTLTFSSSAA…FNEAAGETPS (90 aa)), are a transit peptide targeting the chloroplast. An HXXXXD motif motif is present at residues 229-234 (HQSEAD).

The protein belongs to the GPAT/DAPAT family.

The protein resides in the plastid. Its subcellular location is the chloroplast stroma. It carries out the reaction sn-glycerol 3-phosphate + an acyl-CoA = a 1-acyl-sn-glycero-3-phosphate + CoA. The protein operates within phospholipid metabolism; CDP-diacylglycerol biosynthesis; CDP-diacylglycerol from sn-glycerol 3-phosphate: step 1/3. In terms of biological role, esterifies acyl-group from acyl-ACP to the sn-1 position of glycerol-3-phosphate. The enzyme from chilling-resistant plants discriminates against non-fluid palmitic acid and selects oleic acid whereas the enzyme from sensitive plants accepts both fatty acids. This is an oleate-selective acyltransferase. The sequence is that of Glycerol-3-phosphate acyltransferase, chloroplastic (ATS1) from Arabidopsis thaliana (Mouse-ear cress).